A 125-amino-acid polypeptide reads, in one-letter code: uncharacterized protein (125 aa).

The region spanning 14–112 (CPVEFTLDVI…WGESNRDVLE (99 aa)) is the HTH hxlR-type domain.

This is an uncharacterized protein from Bacillus subtilis (strain 168).